A 158-amino-acid chain; its full sequence is Ribonuclease H (158 aa).

The 142-residue stretch at 3–144 folds into the RNase H type-1 domain; that stretch reads ELKLIHIFTD…CDQLARAAAE (142 aa). Mg(2+) contacts are provided by Asp-12, Glu-50, Asp-72, and Asp-136.

This sequence belongs to the RNase H family. In terms of assembly, monomer. Requires Mg(2+) as cofactor.

The protein localises to the cytoplasm. It carries out the reaction Endonucleolytic cleavage to 5'-phosphomonoester.. In terms of biological role, endonuclease that specifically degrades the RNA of RNA-DNA hybrids. In Shewanella sp. (strain MR-4), this protein is Ribonuclease H.